Here is a 605-residue protein sequence, read N- to C-terminus: Arginine--tRNA ligase (605 aa).

A 'HIGH' region motif is present at residues 131 to 141 (ANPTGPMHVGH). The tract at residues 290–309 (PPPKSKKGQPAPAQAASNSA) is disordered. Residues 298-309 (QPAPAQAASNSA) show a composition bias toward low complexity.

It belongs to the class-I aminoacyl-tRNA synthetase family. Monomer.

It is found in the cytoplasm. It catalyses the reaction tRNA(Arg) + L-arginine + ATP = L-arginyl-tRNA(Arg) + AMP + diphosphate. This is Arginine--tRNA ligase from Anaeromyxobacter sp. (strain Fw109-5).